Here is a 368-residue protein sequence, read N- to C-terminus: Large ribosomal subunit protein bL27m (368 aa).

A mitochondrion-targeting transit peptide spans 1–20 (MFSGLHTSKYACQVVVQIRT). The disordered stretch occupies residues 23 to 44 (KRAAGSRTSMKDSAGRRLGPKK). Over residues 31–44 (SMKDSAGRRLGPKK) the composition is skewed to basic and acidic residues.

Belongs to the bacterial ribosomal protein bL27 family.

It localises to the mitochondrion. Functionally, component of the large subunit of mitochondrial ribosome. This is Large ribosomal subunit protein bL27m (MRPL2) from Candida glabrata (strain ATCC 2001 / BCRC 20586 / JCM 3761 / NBRC 0622 / NRRL Y-65 / CBS 138) (Yeast).